We begin with the raw amino-acid sequence, 625 residues long: Autophagy-related protein 20 (625 aa).

The tract at residues 1 to 59 is disordered; sequence MNPNDNNLFGDIEQDNNPSFYGNQSFLRDPYGKSKQTCPPSVTSNGDPSITNDDNNSAH. Polar residues-rich tracts occupy residues 15 to 26 and 34 to 59; these read DNNPSFYGNQSF and SKQTCPPSVTSNGDPSITNDDNNSAH. The region spanning 79–202 is the PX domain; that stretch reads NDPNLQINVI…HKFLDPNYEL (124 aa). A 1,2-diacyl-sn-glycero-3-phospho-(1D-myo-inositol-3-phosphate) contacts are provided by R118, S120, K144, and R167.

It belongs to the sorting nexin family.

The protein localises to the endosome membrane. The protein resides in the preautophagosomal structure membrane. In terms of biological role, required for cytoplasm to vacuole transport (Cvt), pexophagy and mitophagy. Also involved in endoplasmic reticulum-specific autophagic process and is essential for the survival of cells subjected to severe ER stress. Functions in protein retrieval from the endocytic pathway. This chain is Autophagy-related protein 20 (ATG20), found in Debaryomyces hansenii (strain ATCC 36239 / CBS 767 / BCRC 21394 / JCM 1990 / NBRC 0083 / IGC 2968) (Yeast).